The sequence spans 623 residues: E3 ubiquitin-protein ligase ORTHRUS 5 (623 aa).

Residues 12–62 form a PHD-type zinc finger; that stretch reads DGVCMRCQVNPPSEETLTCGTCVTPWHVSCLLPESLASSTGDWECPDCSGV. The segment at 129–169 adopts an RING-type 1 zinc-finger fold; sequence CSICIQLPERPVTTPCGHNFCLKCFEKWAVGQGKLTCMICR. The YDG domain occupies 258–407; the sequence is TRNQGVLVGE…HKMCRYLFVR (150 aa). Residues 498 to 555 form an RING-type 2 zinc finger; the sequence is CQICRKVLSLPVTTPCAHNFCKACLEAKFAGITQLRDRSNGVRKLRAKKNIMTCPCCT. Positions 580 to 623 are disordered; it reads KSEEEAEVAESSNISEEEGEEESEPPTKKIKMDKNSVGGTSLSA. Acidic residues predominate over residues 594–603; it reads SEEEGEEESE. Residues 604-613 are compositionally biased toward basic and acidic residues; it reads PPTKKIKMDK.

As to expression, expressed in inflorescences.

The protein resides in the nucleus. It catalyses the reaction S-ubiquitinyl-[E2 ubiquitin-conjugating enzyme]-L-cysteine + [acceptor protein]-L-lysine = [E2 ubiquitin-conjugating enzyme]-L-cysteine + N(6)-ubiquitinyl-[acceptor protein]-L-lysine.. It functions in the pathway protein modification; protein ubiquitination. E3 ubiquitin-protein ligase. Participates in CpG methylation-dependent transcriptional regulation and epigenetic transcriptional silencing. Mediates ubiquitination with the E2 ubiquitin-conjugating enzyme UBC11. The sequence is that of E3 ubiquitin-protein ligase ORTHRUS 5 (ORTH5) from Arabidopsis thaliana (Mouse-ear cress).